Here is a 475-residue protein sequence, read N- to C-terminus: MKRWPVFPRSLRQLVMLAFLLILLPLLVLAWQAWQSLNALSDQAALVNRTTLIDARRSEAMTNAALEMERSYRQYCVLDDPTLAKVYQSQRKRYSEMLDAHAGVLPDDKLYQALRQDLNNLAQLQCNNSGPDAAAAARLEAFASANTEMVQATRTVVFSRGQQLQREIAERGQYFGWQSLVLFLVSLVMVLLFTRMIIGPVKNIERMINRLGEGRSLGNSVSFSGPSELRSVGQRILWLSERLSWLESQRHQFLRHLSHELKTPLASMREGTELLADQVVGPLTPEQKEVVSILDSSSRNLQKLIEQLLDYNRKQADSAVELDNVELAPLVETVVSAHSLPARAKMMHTDVDLKATACLAEPMLLMSVLDNLYSNAVHYGAESGNICLRSSLHGARVYIDVINTGTPIPQEERAMIFEPFFQGSHQRKGAVKGSGLGLSIARDCIRRMQGELYLVDESGQDVCFRIELPSSKNTK.

Topologically, residues 1 to 13 (MKRWPVFPRSLRQ) are cytoplasmic. A helical transmembrane segment spans residues 14–34 (LVMLAFLLILLPLLVLAWQAW). Topologically, residues 35 to 173 (QSLNALSDQA…LQREIAERGQ (139 aa)) are periplasmic. Residues 174-194 (YFGWQSLVLFLVSLVMVLLFT) traverse the membrane as a helical segment. Over 195–475 (RMIIGPVKNI…IELPSSKNTK (281 aa)) the chain is Cytoplasmic. The Histidine kinase domain occupies 256-472 (HLSHELKTPL…CFRIELPSSK (217 aa)). His-259 carries the phosphohistidine; by autocatalysis modification.

Post-translationally, autophosphorylated.

It localises to the cell inner membrane. It carries out the reaction ATP + protein L-histidine = ADP + protein N-phospho-L-histidine.. Functionally, member of the two-component regulatory system QseF/QseE involved in the regulation of virulence and metabolism in EHEC. Required for pedestal formation in host epithelial cells during infection. Autophosphorylates in response to epinephrine, sulfate or phosphate and then probably transfers its phosphate group to QseF. The protein is Sensor histidine kinase QseE (qseE) of Escherichia coli O157:H7.